The following is a 677-amino-acid chain: AP-2 complex subunit beta (677 aa).

The tract at residues 597–677 (RLRTRDSNPS…PMTPETHLMD (81 aa)) is disordered. Residues 616 to 627 (KKYNHFHQKSQT) are compositionally biased toward basic residues. Residues 636–654 (RNSWNPSPFSDESNSNTFS) show a composition bias toward polar residues.

Belongs to the adaptor complexes large subunit family. As to quaternary structure, adaptor protein complex 2 (AP-2) is a heterotetramer composed of two large adaptins (alpha-type subunit apl3 and beta-type subunit apl1), a medium chain (mu-type subunit apm4) and a small adaptin (sigma-type subunit aps2).

It is found in the cell membrane. Its subcellular location is the membrane. The protein localises to the coated pit. Adaptins are components of the adaptor complexes which link clathrin to receptors in coated vesicles. Clathrin-associated protein complexes are believed to interact with the cytoplasmic tails of membrane proteins, leading to their selection and concentration. Beta adaptin is a subunit of the plasma membrane adaptor. In Schizosaccharomyces pombe (strain 972 / ATCC 24843) (Fission yeast), this protein is AP-2 complex subunit beta (apl1).